We begin with the raw amino-acid sequence, 360 residues long: Protein DVR-1 (360 aa).

Positions 1–16 (MVWLRLWAFLHILAIV) are cleaved as a signal peptide. The propeptide occupies 17 to 246 (TLDPELKRRE…LRCKRPRRKR (230 aa)). N113, N181, and N301 each carry an N-linked (GlcNAc...) asparagine glycan. Intrachain disulfides connect C259/C325, C288/C357, and C292/C359.

Belongs to the TGF-beta family. As to quaternary structure, homodimer. Vegetal region of the egg.

Its subcellular location is the secreted. In terms of biological role, serves to facilitate the differentiation of either mesoderm or endoderm either as a cofactor in an instructive signal or by providing permissive environment. The sequence is that of Protein DVR-1 (dvr1) from Xenopus laevis (African clawed frog).